Here is a 248-residue protein sequence, read N- to C-terminus: Probable transcriptional regulatory protein RPC_4807 (248 aa).

The segment at 1–21 is disordered; it reads MAGHSQFKNIMHRKGRQDAQK.

It belongs to the TACO1 family.

It is found in the cytoplasm. This is Probable transcriptional regulatory protein RPC_4807 from Rhodopseudomonas palustris (strain BisB18).